Here is a 574-residue protein sequence, read N- to C-terminus: Aspartate--tRNA ligase (574 aa).

E172 provides a ligand contact to L-aspartate. The segment at 196-199 is aspartate; the sequence is QIFK. Residue R218 coordinates L-aspartate. ATP is bound by residues 218–220 and Q227; that span reads RDE. Position 453 (H453) interacts with L-aspartate. ATP is bound at residue E487. L-aspartate is bound at residue R494. 539 to 542 contacts ATP; it reads GLDR.

Belongs to the class-II aminoacyl-tRNA synthetase family. Type 1 subfamily. In terms of assembly, homodimer.

It is found in the cytoplasm. The catalysed reaction is tRNA(Asp) + L-aspartate + ATP = L-aspartyl-tRNA(Asp) + AMP + diphosphate. Catalyzes the attachment of L-aspartate to tRNA(Asp) in a two-step reaction: L-aspartate is first activated by ATP to form Asp-AMP and then transferred to the acceptor end of tRNA(Asp). The polypeptide is Aspartate--tRNA ligase (Blochmanniella pennsylvanica (strain BPEN)).